Reading from the N-terminus, the 121-residue chain is Protein yippee-like 5 (121 aa).

Residues 13 to 110 (RLFSCANCDT…LERALVRESE (98 aa)) form the Yippee domain. The Zn(2+) site is built by Cys-17, Cys-20, Cys-73, and Cys-76. Ser-118 carries the phosphoserine modification.

Belongs to the yippee family. As to quaternary structure, identified in the CTLH complex that contains GID4, RANBP9 and/or RANBP10, MKLN1, MAEA, RMND5A (or alternatively its paralog RMND5B), GID8, ARMC8, WDR26 and YPEL5. Within this complex, MAEA, RMND5A (or alternatively its paralog RMND5B), GID8, WDR26, and RANBP9 and/or RANBP10 form the catalytic core, while GID4, MKLN1, ARMC8 and YPEL5 have ancillary roles. Interacts with RANBP9 and RANBP10.

The protein localises to the nucleus. Its subcellular location is the cytoplasm. It localises to the cytoskeleton. The protein resides in the microtubule organizing center. It is found in the centrosome. The protein localises to the spindle pole. Its subcellular location is the midbody. Component of the CTLH E3 ubiquitin-protein ligase complex that selectively accepts ubiquitin from UBE2H and mediates ubiquitination and subsequent proteasomal degradation of the transcription factor HBP1. Required for normal cell proliferation. The sequence is that of Protein yippee-like 5 (YPEL5) from Bos taurus (Bovine).